Consider the following 123-residue polypeptide: Non-specific lipid-transfer protein 3 (123 aa).

The N-terminal stretch at 1-25 is a signal peptide; sequence MASSGQLLKLVCLVAVMCCMAVGGP. 4 disulfides stabilise this stretch: Cys-33/Cys-80, Cys-43/Cys-57, Cys-58/Cys-105, and Cys-78/Cys-119.

It belongs to the plant LTP family.

Functionally, plant non-specific lipid-transfer proteins transfer phospholipids as well as galactolipids across membranes. May play a role in wax or cutin deposition in the cell walls of expanding epidermal cells and certain secretory tissues. The protein is Non-specific lipid-transfer protein 3 of Prunus dulcis (Almond).